Reading from the N-terminus, the 836-residue chain is Zinc fingers and homeoboxes protein 2 (836 aa).

Residues 1–61 (MASKRKSTTP…EHSSKETEVV (61 aa)) form a disordered region. Over residues 8 to 19 (TTPCMVRTSQVL) the composition is skewed to polar residues. Positions 27–77 (ADRAKDKGAGMPQSDVTKDSWAAEPEHSSKETEVVEVKSMGENLSKKLQGG) are interaction with EFNB1. The segment covering 50–61 (EPEHSSKETEVV) has biased composition (basic and acidic residues). Lys-64 is covalently cross-linked (Glycyl lysine isopeptide (Lys-Gly) (interchain with G-Cter in SUMO2)). C2H2-type zinc fingers lie at residues 78–101 (YECKYCPYSTQNLNEFTEHVDMQH) and 110–133 (YVCAECNFTTKKYDSLSDHNSKFH). Residues 164–214 (PITASGPGSSDNDPGVSVGKTPMTKTGKLKADAKKVPKKPDEAAPENHMEG) form a disordered region. The span at 192–214 (LKADAKKVPKKPDEAAPENHMEG) shows a compositional bias: basic and acidic residues. Positions 195-358 (DAKKVPKKPD…PAQLTPTKVS (164 aa)) are required for homodimerization. DNA-binding regions (homeobox) lie at residues 263–324 (NTTK…WSPE), 439–501 (TPAS…IVHI), 530–591 (PQKF…EQAV), and 628–690 (SPSS…TLSW). The tract at residues 263 to 446 (NTTKYNSALD…PLTPASDRKK (184 aa)) is required for repressor activity. Positions 263–497 (NTTKYNSALD…SDHRYRCQRG (235 aa)) are required for interaction with NFYA. The required for nuclear localization stretch occupies residues 317–446 (HGISWSPEEV…PLTPASDRKK (130 aa)). Positions 404 to 442 (GQKRPLVTPQAAPEPKRPHIAQVPEPPPKVANTPLTPAS) are disordered. Residue Lys-455 forms a Glycyl lysine isopeptide (Lys-Gly) (interchain with G-Cter in SUMO2) linkage. 3 stretches are compositionally biased toward basic and acidic residues: residues 699-709 (MSDDRGRDAVS), 730-746 (YAKDPKALSEEDSEKLV), and 813-824 (RVAEGTVERADS). A disordered region spans residues 699-836 (MSDDRGRDAV…DSTPAEAGQA (138 aa)). A phosphoserine mark is found at Ser-824 and Ser-826.

This sequence belongs to the ZHX family. In terms of assembly, homodimer (via homeobox domain 1). Heterodimer with ZHX1 (via homeobox domain 1). Heterodimer with ZHX3 (via homeobox domain 1). Heterodimerization with ZHX1 is not necessary for repressor activity. Interacts (via homeobox domain) with NFYA (via N-terminus). Interacts with EFNB1 intracellular domain peptide; the interaction enhances ZHX2 transcriptional repression activity. Expressed in retina where it localizes to Muller glial cells of the inner nuclear layer (at protein level). Detected in heart, brain, spleen, lung, liver, skeletal muscle, kidney and testis.

It is found in the nucleus. Acts as a transcriptional repressor. Represses the promoter activity of the CDC25C gene stimulated by NFYA. May play a role in retinal development where it regulates the composition of bipolar cell populations, by promoting differentiation of bipolar OFF-type cells. In the brain, may promote maintenance and suppress differentiation of neural progenitor cells in the developing cortex. The protein is Zinc fingers and homeoboxes protein 2 (Zhx2) of Mus musculus (Mouse).